We begin with the raw amino-acid sequence, 264 residues long: 3-methyl-2-oxobutanoate hydroxymethyltransferase (264 aa).

Residues Asp45 and Asp84 each contribute to the Mg(2+) site. Residues 45–46 (DS), Asp84, and Lys113 contribute to the 3-methyl-2-oxobutanoate site. Glu115 serves as a coordination point for Mg(2+). Glu182 functions as the Proton acceptor in the catalytic mechanism.

Belongs to the PanB family. Homodecamer; pentamer of dimers. It depends on Mg(2+) as a cofactor.

The protein localises to the cytoplasm. The catalysed reaction is 3-methyl-2-oxobutanoate + (6R)-5,10-methylene-5,6,7,8-tetrahydrofolate + H2O = 2-dehydropantoate + (6S)-5,6,7,8-tetrahydrofolate. Its pathway is cofactor biosynthesis; (R)-pantothenate biosynthesis; (R)-pantoate from 3-methyl-2-oxobutanoate: step 1/2. In terms of biological role, catalyzes the reversible reaction in which hydroxymethyl group from 5,10-methylenetetrahydrofolate is transferred onto alpha-ketoisovalerate to form ketopantoate. In Caldicellulosiruptor bescii (strain ATCC BAA-1888 / DSM 6725 / KCTC 15123 / Z-1320) (Anaerocellum thermophilum), this protein is 3-methyl-2-oxobutanoate hydroxymethyltransferase.